The sequence spans 183 residues: Dual-action ribosomal maturation protein DarP (183 aa).

This sequence belongs to the DarP family.

It localises to the cytoplasm. In terms of biological role, member of a network of 50S ribosomal subunit biogenesis factors which assembles along the 30S-50S interface, preventing incorrect 23S rRNA structures from forming. Promotes peptidyl transferase center (PTC) maturation. This chain is Dual-action ribosomal maturation protein DarP, found in Citrobacter koseri (strain ATCC BAA-895 / CDC 4225-83 / SGSC4696).